Here is a 331-residue protein sequence, read N- to C-terminus: 6-phosphogluconolactonase (331 aa).

N6-acetyllysine is present on Lys287.

Belongs to the cycloisomerase 2 family.

The enzyme catalyses 6-phospho-D-glucono-1,5-lactone + H2O = 6-phospho-D-gluconate + H(+). Its pathway is carbohydrate degradation; pentose phosphate pathway; D-ribulose 5-phosphate from D-glucose 6-phosphate (oxidative stage): step 2/3. Catalyzes the hydrolysis of 6-phosphogluconolactone to 6-phosphogluconate. The sequence is that of 6-phosphogluconolactonase from Shigella sonnei (strain Ss046).